Reading from the N-terminus, the 341-residue chain is Alpha-1,4-N-acetylglucosaminyltransferase (341 aa).

The Cytoplasmic segment spans residues 1 to 4 (MLKE). A helical; Signal-anchor for type II membrane protein membrane pass occupies residues 5–25 (IYLSLSLVLVFACGLLYQLTM). Residues 26-341 (RSQCFFACLP…VSKKPGTGSR (316 aa)) lie on the Lumenal side of the membrane. N-linked (GlcNAc...) asparagine glycosylation is present at asparagine 100. The DXD motif motif lies at 168–170 (DTD).

This sequence belongs to the glycosyltransferase 32 family.

The protein localises to the golgi apparatus membrane. Its pathway is protein modification; protein glycosylation. Its function is as follows. Catalyzes the transfer of N-acetylglucosamine (GlcNAc) to core 2 branched O-glycans. Necessary for the synthesis of type III mucin which is specifically produced in the stomach, duodenum, and pancreatic duct. May protect against inflammation-associated gastric adenocarcinoma. The sequence is that of Alpha-1,4-N-acetylglucosaminyltransferase from Mus musculus (Mouse).